Reading from the N-terminus, the 38-residue chain is Photosystem II reaction center protein X (38 aa).

A helical membrane pass occupies residues 8-28 (FLWSLVAGAVVLGALFGAIIF).

This sequence belongs to the PsbX family. Type 1 subfamily. As to quaternary structure, PSII is composed of 1 copy each of membrane proteins PsbA, PsbB, PsbC, PsbD, PsbE, PsbF, PsbH, PsbI, PsbJ, PsbK, PsbL, PsbM, PsbT, PsbX, PsbY, PsbZ, Psb30/Ycf12, peripheral proteins PsbO, CyanoQ (PsbQ), PsbU, PsbV and a large number of cofactors. It forms dimeric complexes.

It is found in the cellular thylakoid membrane. Its function is as follows. Involved in the binding and/or turnover of quinones at the Q(B) site of photosystem II (PSII). PSII is a light-driven water plastoquinone oxidoreductase, using light energy to abstract electrons from H(2)O, generating a proton gradient subsequently used for ATP formation. The sequence is that of Photosystem II reaction center protein X from Synechococcus sp. (strain JA-2-3B'a(2-13)) (Cyanobacteria bacterium Yellowstone B-Prime).